The chain runs to 416 residues: Nonsense-mediated decay protein 4 (416 aa).

3 disordered regions span residues 1–21 (MSLYPYNSDEDEARKNSNYHD), 195–218 (QHPIPQGESLESHNSFDETNYNNS), and 356–393 (DRPSKSKNKNKNKNTKKSTKPKQINGVVSDGCTGANGD). A compositionally biased stretch (basic and acidic residues) spans 12-21 (EARKNSNYHD). Positions 360-375 (KSKNKNKNKNTKKSTK) are enriched in basic residues.

Its subcellular location is the cytoplasm. Its function is as follows. Involved in nonsense-mediated decay of mRNAs containing premature stop codons. This chain is Nonsense-mediated decay protein 4 (NMD4), found in Debaryomyces hansenii (strain ATCC 36239 / CBS 767 / BCRC 21394 / JCM 1990 / NBRC 0083 / IGC 2968) (Yeast).